Here is a 323-residue protein sequence, read N- to C-terminus: Aldo-keto reductase family 1 member C2 (323 aa).

NADP(+) is bound by residues 20-24 (GFGTY) and aspartate 50. A substrate-binding site is contributed by tyrosine 24. Tyrosine 55 serves as the catalytic Proton donor. Histidine 117 provides a ligand contact to substrate. NADP(+) is bound by residues 166-167 (SN), glutamine 190, and 216-222 (YSALGSH). The substrate site is built by histidine 222 and tryptophan 227. NADP(+) is bound at residue 270–280 (KSYNEQRIRQN).

The protein belongs to the aldo/keto reductase family. Expressed in fetal testes. Expressed in fetal and adult adrenal glands.

The protein localises to the cytoplasm. The protein resides in the cytosol. It carries out the reaction a 3alpha-hydroxysteroid + NADP(+) = a 3-oxosteroid + NADPH + H(+). The enzyme catalyses a 3alpha-hydroxysteroid + NAD(+) = a 3-oxosteroid + NADH + H(+). The catalysed reaction is 5alpha-androstane-3alpha,17beta-diol + NADP(+) = 17beta-hydroxy-5alpha-androstan-3-one + NADPH + H(+). It catalyses the reaction 5alpha-androstane-3alpha,17beta-diol + NAD(+) = 17beta-hydroxy-5alpha-androstan-3-one + NADH + H(+). It carries out the reaction 5alpha-androstane-3alpha,17beta-diol + NAD(+) = androsterone + NADH + H(+). The enzyme catalyses 17beta-estradiol + NADP(+) = estrone + NADPH + H(+). The catalysed reaction is 17beta-estradiol + NAD(+) = estrone + NADH + H(+). It catalyses the reaction (20S)-hydroxypregn-4-en-3-one + NADP(+) = progesterone + NADPH + H(+). It carries out the reaction (20S)-hydroxypregn-4-en-3-one + NAD(+) = progesterone + NADH + H(+). The enzyme catalyses androsterone + NADP(+) = 5alpha-androstan-3,17-dione + NADPH + H(+). The catalysed reaction is (3beta,5alpha,17beta)-3-hydroxy-androstan-17-yl sulfate + NADP(+) = 5alpha-dihydrotestosterone sulfate + NADPH + H(+). It catalyses the reaction (1R,2R)-1,2-dihydrobenzene-1,2-diol + NADP(+) = catechol + NADPH + H(+). It carries out the reaction (S)-indan-1-ol + NAD(+) = indan-1-one + NADH + H(+). The enzyme catalyses (S)-indan-1-ol + NADP(+) = indan-1-one + NADPH + H(+). Its pathway is steroid metabolism. Inhibited by hexestrol with an IC(50) of 2.8 uM, 1,10-phenanthroline with an IC(50) of 2100 uM, 1,7-phenanthroline with an IC(50) of 1500 uM, flufenamic acid with an IC(50) of 0.9 uM, indomethacin with an IC(50) of 75 uM, ibuprofen with an IC(50) of 6.9 uM, lithocholic acid with an IC(50) of 0.07 uM, ursodeoxycholic acid with an IC(50) of 0.08 uM and chenodeoxycholic acid with an IC(50) of 0.13 uM. The oxidation reaction is inhibited by low micromolar concentrations of NADPH. Cytosolic aldo-keto reductase that catalyzes the NADH and NADPH-dependent reduction of ketosteroids to hydroxysteroids. Most probably acts as a reductase in vivo since the oxidase activity measured in vitro is inhibited by physiological concentrations of NADPH. Displays a broad positional specificity acting on positions 3, 17 and 20 of steroids and regulates the metabolism of hormones like estrogens and androgens. Works in concert with the 5-alpha/5-beta-steroid reductases to convert steroid hormones into the 3-alpha/5-alpha and 3-alpha/5-beta-tetrahydrosteroids. Catalyzes the inactivation of the most potent androgen 5-alpha-dihydrotestosterone (5-alpha-DHT) to 5-alpha-androstane-3-alpha,17-beta-diol (3-alpha-diol). Also specifically able to produce 17beta-hydroxy-5alpha-androstan-3-one/5alphaDHT. May also reduce conjugated steroids such as 5alpha-dihydrotestosterone sulfate. Displays affinity for bile acids. The polypeptide is Aldo-keto reductase family 1 member C2 (AKR1C2) (Homo sapiens (Human)).